The chain runs to 305 residues: tRNA pseudouridine synthase B (305 aa).

Aspartate 41 (nucleophile) is an active-site residue.

The protein belongs to the pseudouridine synthase TruB family. Type 1 subfamily.

The catalysed reaction is uridine(55) in tRNA = pseudouridine(55) in tRNA. In terms of biological role, responsible for synthesis of pseudouridine from uracil-55 in the psi GC loop of transfer RNAs. This Prochlorococcus marinus subsp. pastoris (strain CCMP1986 / NIES-2087 / MED4) protein is tRNA pseudouridine synthase B.